Consider the following 89-residue polypeptide: Small ribosomal subunit protein bS18 (89 aa).

Belongs to the bacterial ribosomal protein bS18 family. As to quaternary structure, part of the 30S ribosomal subunit. Forms a tight heterodimer with protein bS6.

In terms of biological role, binds as a heterodimer with protein bS6 to the central domain of the 16S rRNA, where it helps stabilize the platform of the 30S subunit. This is Small ribosomal subunit protein bS18 from Treponema denticola (strain ATCC 35405 / DSM 14222 / CIP 103919 / JCM 8153 / KCTC 15104).